The sequence spans 57 residues: Large ribosomal subunit protein bL32 (57 aa).

Over residues 1–19 (MAVPKRRMSRANTRSRRAQ) the composition is skewed to basic residues. Positions 1-20 (MAVPKRRMSRANTRSRRAQW) are disordered.

The protein belongs to the bacterial ribosomal protein bL32 family.

The protein is Large ribosomal subunit protein bL32 of Mycolicibacterium smegmatis (strain ATCC 700084 / mc(2)155) (Mycobacterium smegmatis).